Here is a 1413-residue protein sequence, read N- to C-terminus: ABC transporter G family member 33 (1413 aa).

A compositionally biased stretch (low complexity) spans 1 to 10 (MGSSFRSSSS). The disordered stretch occupies residues 1 to 21 (MGSSFRSSSSRNEHEDGGDEA). Residues 11-21 (RNEHEDGGDEA) are compositionally biased toward basic and acidic residues. The ABC transporter 1 domain occupies 140–412 (LKLSGVRTNE…FEECGFQCPE (273 aa)). 172 to 179 (GPPGCGKT) provides a ligand contact to ATP. An ABC transmembrane type-2 1 domain is found at 490-702 (ELFRACISRE…AEIGLSVNEF (213 aa)). The next 6 membrane-spanning stretches (helical) occupy residues 509 to 529 (VYLFKTFQLVLAAIITMTVFI), 546 to 566 (CLFFATVVLLVDGIPELSMTV), 580 to 600 (FYPAWAYAIPATVLKIPLSFF), 626 to 646 (FMILFAVHFTSISMFRCIAAI), 652 to 672 (AAMTAGSFVMLITFVFAGFAI), and 738 to 758 (LSALLGLTIIFNTIFTLALSF). The ABC transporter 2 domain occupies 813-1065 (ITFQDLNYYV…CVIEYFQNIP (253 aa)). Residue 858–865 (GISGAGKT) participates in ATP binding. In terms of domain architecture, ABC transmembrane type-2 2 spans 1138–1352 (EQFKSCLWKM…TLNLFFSSQY (215 aa)). The next 7 membrane-spanning stretches (helical) occupy residues 1157-1177 (YNLMRIGHTFISSFIFGLLFW), 1189-1209 (LFTVLGAIYGLVLFVGINNCT), 1245-1265 (IPYIFIQSAEFVIVIYPMIGF), 1276-1296 (LYAMFCNLLCFNYLAMFLISI), 1302-1322 (VAAILQSLFFTTFNIFAGFLI), 1330-1350 (WWVWFYYITPTSWTLNLFFSS), and 1385-1405 (ITAIILIAFPIALATMYAFFV).

It belongs to the ABC transporter superfamily. ABCG family. PDR (TC 3.A.1.205) subfamily. As to expression, expressed in roots and stems.

It is found in the membrane. Its function is as follows. May be a general defense protein. The sequence is that of ABC transporter G family member 33 (ABCG33) from Arabidopsis thaliana (Mouse-ear cress).